Reading from the N-terminus, the 593-residue chain is Dolichyl-phosphooligosaccharide-protein glycotransferase 2 (593 aa).

Topologically, residues 1 to 12 are cytoplasmic; the sequence is MTPVGMDRKSLS. The helical transmembrane segment at 13–33 threads the bilayer; that stretch reads LLILIVLLGLCIRLQNFGEIF. The Extracellular portion of the chain corresponds to 34–98; it reads DSRIYYYGYD…GLFLGFWASE (65 aa). A DXD motif 1 motif is present at residues 41-43; it reads GYD. Position 43 (D43) interacts with Mn(2+). Residues 99–119 form a helical membrane-spanning segment; the sequence is IFAVVFPVIIGVLCIVLVYLI. At 120-128 the chain is on the cytoplasmic side; the sequence is SLEVLRNEK. The chain crosses the membrane as a helical span at residues 129–149; it reads FALISAFIFSVCPVTVWKSLL. Residues 150–154 lie on the Extracellular side of the membrane; that stretch reads GKADH. D153 provides a ligand contact to Mn(2+). Residues 153–155 carry the DXD motif 2 motif; that stretch reads DHH. H154 provides a ligand contact to a glycophospholipid. Residue H155 coordinates Mn(2+). Residues 155 to 175 form a helical membrane-spanning segment; the sequence is HIWVVFLLLLSIWLVTKPGLL. The Cytoplasmic portion of the chain corresponds to 176–180; the sequence is KLLSG. Residues 181 to 201 traverse the membrane as a helical segment; that stretch reads IPMLLMALSWLGAPIYAALLA. Residues 202–229 lie on the Extracellular side of the membrane; it reads VSSLFQFNEKEVRIVGISNLIPVLSSIQ. The helical transmembrane segment at 230–250 threads the bilayer; the sequence is NLFLGFSFLAIAVFLLVGSFV. Over 251 to 265 the chain is Cytoplasmic; that stretch reads KRFERRFRYAIVYYL. A helical membrane pass occupies residues 266–286; that stretch reads CICSVALLSAYLMPVGWLGFV. Residues 287–310 are Extracellular-facing; sequence KSGISYVLGTDIYLPTIREARSFQ. The TIXE motif motif lies at 302 to 305; the sequence is TIRE. The helical transmembrane segment at 311 to 331 threads the bilayer; that stretch reads ILGVISSAGYLFFVLAIPALF. Position 332 (M332) is a topological domain, cytoplasmic. Residues 333–353 form a helical membrane-spanning segment; sequence LRNGFLKVFFVLSFLISILQL. R354 is a topological domain (extracellular). R354 contacts a glycophospholipid. A helical transmembrane segment spans residues 355–375; sequence FVEVLAFPVAILASYTICQIL. Topologically, residues 376-411 are cytoplasmic; it reads ERVDYPVFRKEEEGESKRRGRKEKKKAVEIRKKDHA. A helical membrane pass occupies residues 412–432; that stretch reads TVIAFLLFLALPCFANSLAPV. At 433-593 the chain is on the extracellular side; sequence EMTMDWKEAL…FGTVKIFEVK (161 aa). Residues 468 to 470 form an interacts with target acceptor peptide in protein substrate region; that stretch reads WWD. The WWDYG motif motif lies at 468–472; that stretch reads WWDYG. A DKi motif motif is present at residues 524–539; sequence ELTVKPETNKTKFIPI.

This sequence belongs to the STT3 family. It depends on Mn(2+) as a cofactor. Mg(2+) is required as a cofactor. Zn(2+) serves as cofactor.

The protein localises to the cell membrane. It catalyses the reaction an archaeal dolichyl phosphooligosaccharide + [protein]-L-asparagine = an archaeal dolichyl phosphate + a glycoprotein with the oligosaccharide chain attached by N-beta-D-glycosyl linkage to a protein L-asparagine.. It participates in protein modification; protein glycosylation. Oligosaccharyl transferase (OST) that catalyzes the initial transfer of a defined glycan (a GalNAc-linked heptasaccharide composed of 4 Hex, 3 dHex and a sulfate for A.fulgidus AglB-S) from the lipid carrier dolichol-monophosphate to an asparagine residue within an Asn-X-Ser/Thr consensus motif in nascent polypeptide chains, the first step in protein N-glycosylation. The chain is Dolichyl-phosphooligosaccharide-protein glycotransferase 2 (aglB2) from Archaeoglobus fulgidus (strain ATCC 49558 / DSM 4304 / JCM 9628 / NBRC 100126 / VC-16).